Consider the following 133-residue polypeptide: Large ribosomal subunit protein bL20 (133 aa).

The protein belongs to the bacterial ribosomal protein bL20 family.

Its function is as follows. Binds directly to 23S ribosomal RNA and is necessary for the in vitro assembly process of the 50S ribosomal subunit. It is not involved in the protein synthesizing functions of that subunit. In Chelativorans sp. (strain BNC1), this protein is Large ribosomal subunit protein bL20.